Reading from the N-terminus, the 180-residue chain is Bifunctional bis(5'-adenosyl)-triphosphatase/adenylylsulfatase FHIT (180 aa).

An HIT domain is found at 27 to 134 (SYAFGPYKID…LPRKGGDFEK (108 aa)). Substrate is bound by residues Asn52 and Gln108. The Histidine triad motif signature appears at 119 to 123 (HVHIH). His121 (tele-AMP-histidine intermediate) is an active-site residue. Residue His123 coordinates substrate.

The enzyme catalyses P(1),P(3)-bis(5'-adenosyl) triphosphate + H2O = AMP + ADP + 2 H(+). The catalysed reaction is adenosine 5'-phosphosulfate + H2O = sulfate + AMP + 2 H(+). It catalyses the reaction adenosine 5'-phosphosulfate + NH4(+) = adenosine 5'-phosphoramidate + sulfate + 2 H(+). It carries out the reaction adenosine 5'-phosphoramidate + H2O = AMP + NH4(+). In terms of biological role, possesses dinucleoside triphosphate hydrolase activity. Cleaves P(1)-P(3)-bis(5'-adenosyl) triphosphate (Ap3A) to yield AMP and ADP. Exhibits adenylylsulfatase activity, hydrolyzing adenosine 5'-phosphosulfate to yield AMP and sulfate. Exhibits adenosine 5'-monophosphoramidase activity, hydrolyzing purine nucleotide phosphoramidates with a single phosphate group such as adenosine 5'monophosphoramidate (AMP-NH2) to yield AMP and NH2. Exhibits adenylylsulfate-ammonia adenylyltransferase, catalyzing the ammonolysis of adenosine 5'-phosphosulfate resulting in the formation of adenosine 5'-phosphoramidate. This chain is Bifunctional bis(5'-adenosyl)-triphosphatase/adenylylsulfatase FHIT, found in Arabidopsis thaliana (Mouse-ear cress).